The sequence spans 386 residues: Succinate--CoA ligase [ADP-forming] subunit beta (386 aa).

One can recognise an ATP-grasp domain in the interval 9–244; sequence KEILHKFNVP…YDEEVKEEIE (236 aa). ATP-binding positions include lysine 46, 53-55, glutamate 99, serine 102, and glutamate 107; that span reads GRG. Mg(2+)-binding residues include asparagine 199 and aspartate 213. Residues asparagine 264 and 321–323 contribute to the substrate site; that span reads GIM.

The protein belongs to the succinate/malate CoA ligase beta subunit family. Heterotetramer of two alpha and two beta subunits. Mg(2+) serves as cofactor.

It carries out the reaction succinate + ATP + CoA = succinyl-CoA + ADP + phosphate. The catalysed reaction is GTP + succinate + CoA = succinyl-CoA + GDP + phosphate. The protein operates within carbohydrate metabolism; tricarboxylic acid cycle; succinate from succinyl-CoA (ligase route): step 1/1. Its function is as follows. Succinyl-CoA synthetase functions in the citric acid cycle (TCA), coupling the hydrolysis of succinyl-CoA to the synthesis of either ATP or GTP and thus represents the only step of substrate-level phosphorylation in the TCA. The beta subunit provides nucleotide specificity of the enzyme and binds the substrate succinate, while the binding sites for coenzyme A and phosphate are found in the alpha subunit. The polypeptide is Succinate--CoA ligase [ADP-forming] subunit beta (Wolbachia sp. subsp. Brugia malayi (strain TRS)).